The primary structure comprises 282 residues: Elongation factor Ts (282 aa).

The tract at residues 80-83 (TDFV) is involved in Mg(2+) ion dislocation from EF-Tu.

Belongs to the EF-Ts family.

The protein resides in the cytoplasm. Its function is as follows. Associates with the EF-Tu.GDP complex and induces the exchange of GDP to GTP. It remains bound to the aminoacyl-tRNA.EF-Tu.GTP complex up to the GTP hydrolysis stage on the ribosome. The polypeptide is Elongation factor Ts (tsf) (Chlamydia trachomatis serovar D (strain ATCC VR-885 / DSM 19411 / UW-3/Cx)).